The primary structure comprises 251 residues: Hydroxyacylglutathione hydrolase (251 aa).

Zn(2+) contacts are provided by His53, His55, Asp57, His58, His110, Asp127, and His165.

It belongs to the metallo-beta-lactamase superfamily. Glyoxalase II family. As to quaternary structure, monomer. It depends on Zn(2+) as a cofactor.

It carries out the reaction an S-(2-hydroxyacyl)glutathione + H2O = a 2-hydroxy carboxylate + glutathione + H(+). The protein operates within secondary metabolite metabolism; methylglyoxal degradation; (R)-lactate from methylglyoxal: step 2/2. Thiolesterase that catalyzes the hydrolysis of S-D-lactoyl-glutathione to form glutathione and D-lactic acid. This Salmonella dublin (strain CT_02021853) protein is Hydroxyacylglutathione hydrolase.